Reading from the N-terminus, the 415-residue chain is Gamma-glutamyl phosphate reductase (415 aa).

The protein belongs to the gamma-glutamyl phosphate reductase family.

The protein localises to the cytoplasm. The catalysed reaction is L-glutamate 5-semialdehyde + phosphate + NADP(+) = L-glutamyl 5-phosphate + NADPH + H(+). It functions in the pathway amino-acid biosynthesis; L-proline biosynthesis; L-glutamate 5-semialdehyde from L-glutamate: step 2/2. In terms of biological role, catalyzes the NADPH-dependent reduction of L-glutamate 5-phosphate into L-glutamate 5-semialdehyde and phosphate. The product spontaneously undergoes cyclization to form 1-pyrroline-5-carboxylate. The sequence is that of Gamma-glutamyl phosphate reductase from Oceanobacillus iheyensis (strain DSM 14371 / CIP 107618 / JCM 11309 / KCTC 3954 / HTE831).